We begin with the raw amino-acid sequence, 261 residues long: Pimeloyl-[acyl-carrier protein] methyl ester esterase (261 aa).

The AB hydrolase-1 domain maps to 16–241 (LVLIHGWGMN…QASHAPFISH (226 aa)). Residues Trp-22, 82–83 (SL), and 143–147 (FMTLQ) contribute to the substrate site. Ser-82 functions as the Nucleophile in the catalytic mechanism. Active-site residues include Asp-207 and His-235. His-235 serves as a coordination point for substrate.

It belongs to the AB hydrolase superfamily. Carboxylesterase BioH family. As to quaternary structure, monomer.

It localises to the cytoplasm. The catalysed reaction is 6-carboxyhexanoyl-[ACP] methyl ester + H2O = 6-carboxyhexanoyl-[ACP] + methanol + H(+). The protein operates within cofactor biosynthesis; biotin biosynthesis. Functionally, the physiological role of BioH is to remove the methyl group introduced by BioC when the pimeloyl moiety is complete. It allows to synthesize pimeloyl-ACP via the fatty acid synthetic pathway through the hydrolysis of the ester bonds of pimeloyl-ACP esters. The sequence is that of Pimeloyl-[acyl-carrier protein] methyl ester esterase from Aliivibrio salmonicida (strain LFI1238) (Vibrio salmonicida (strain LFI1238)).